A 474-amino-acid chain; its full sequence is Alginate biosynthesis protein AlgX (474 aa).

The signal sequence occupies residues 1–26 (MKTRTSRLFRLSALAAGLCLAQAALA). An SGNH hydrolase-like domain region spans residues 27–347 (ADPGAAPSYQ…QAMPLVDNGC (321 aa)). A disulfide bond links cysteine 44 and cysteine 229. The active site involves aspartate 174. Histidine 176 acts as the Proton acceptor in catalysis. The active-site Nucleophile is the serine 269. A disulfide bond links cysteine 347 and cysteine 460. The CBM domain stretch occupies residues 348–474 (SGRKTVLSRK…AKASQSVAGR (127 aa)).

The protein belongs to the AlgX family. In terms of assembly, monomer. Interacts with AlgK and MucD.

Its subcellular location is the periplasm. It participates in glycan biosynthesis; alginate biosynthesis. Plays two roles in the biosynthesis of the exopolysaccharide alginate: protects alginate from degradation as the polymer traverses the periplasm, and also plays a role in its O-acetylation. Acetylation of alginate causes the cells in the biofilm to adhere better to lung epithelium, form microcolonies, and resist the effects of the host immune system and/or antibiotics. Displays a low acetylesterase activity in vitro using a pseudosubstrate, 3-carboxyumbelliferyl acetate. Probably has acetyltransferase activity in vivo. This Pseudomonas aeruginosa (strain ATCC 15692 / DSM 22644 / CIP 104116 / JCM 14847 / LMG 12228 / 1C / PRS 101 / PAO1) protein is Alginate biosynthesis protein AlgX (algX).